Consider the following 92-residue polypeptide: N(2)-fixation sustaining protein CowN (92 aa).

Belongs to the CowN family.

In terms of biological role, is required to sustain N(2)-dependent growth in the presence of low levels of carbon monoxide (CO). Probably acts by protecting the N(2) fixation ability of the nitrogenase complex, which is inactivated in the presence of CO. The sequence is that of N(2)-fixation sustaining protein CowN from Rhodopseudomonas palustris (strain BisA53).